Here is a 442-residue protein sequence, read N- to C-terminus: Ribosomal protein uS12 methylthiotransferase RimO (442 aa).

In terms of domain architecture, MTTase N-terminal spans 5 to 117 (PSIGVVSLGC…VLDAIHAALP (113 aa)). [4Fe-4S] cluster-binding residues include Cys14, Cys50, Cys79, Cys148, Cys152, and Cys155. In terms of domain architecture, Radical SAM core spans 134 to 371 (LTPPHYAYLK…MAVQEAISRQ (238 aa)). Positions 374–441 (QRRVGQRQRV…AHDLYGMVVS (68 aa)) constitute a TRAM domain.

This sequence belongs to the methylthiotransferase family. RimO subfamily. The cofactor is [4Fe-4S] cluster.

It is found in the cytoplasm. It carries out the reaction L-aspartate(89)-[ribosomal protein uS12]-hydrogen + (sulfur carrier)-SH + AH2 + 2 S-adenosyl-L-methionine = 3-methylsulfanyl-L-aspartate(89)-[ribosomal protein uS12]-hydrogen + (sulfur carrier)-H + 5'-deoxyadenosine + L-methionine + A + S-adenosyl-L-homocysteine + 2 H(+). In terms of biological role, catalyzes the methylthiolation of an aspartic acid residue of ribosomal protein uS12. In Acidithiobacillus ferrooxidans (strain ATCC 53993 / BNL-5-31) (Leptospirillum ferrooxidans (ATCC 53993)), this protein is Ribosomal protein uS12 methylthiotransferase RimO.